A 74-amino-acid chain; its full sequence is RFTFDCPGMMGQRYLYEQVEQVCDDCYNLYREEKIAVNCRENCFLNSWFTVCLQATMREHETPRFDIWRSILKA.

3 cysteine pairs are disulfide-bonded: Cys-6–Cys-43, Cys-23–Cys-39, and Cys-26–Cys-52. Ala-74 carries the alanine amide modification.

The protein resides in the secreted. In terms of biological role, inhibits Y-organs where molting hormone (ecdysteroid) is secreted. A molting cycle is initiated when MIH secretion diminishes or stops. Has little or no hyperglycemic activity. The polypeptide is Probable molt-inhibiting hormone (Jasus lalandii (Cape rock lobster)).